Here is a 246-residue protein sequence, read N- to C-terminus: 1-(5-phosphoribosyl)-5-[(5-phosphoribosylamino)methylideneamino] imidazole-4-carboxamide isomerase (246 aa).

Asp8 (proton acceptor) is an active-site residue. The Proton donor role is filled by Asp131.

The protein belongs to the HisA/HisF family.

The protein localises to the cytoplasm. It carries out the reaction 1-(5-phospho-beta-D-ribosyl)-5-[(5-phospho-beta-D-ribosylamino)methylideneamino]imidazole-4-carboxamide = 5-[(5-phospho-1-deoxy-D-ribulos-1-ylimino)methylamino]-1-(5-phospho-beta-D-ribosyl)imidazole-4-carboxamide. The protein operates within amino-acid biosynthesis; L-histidine biosynthesis; L-histidine from 5-phospho-alpha-D-ribose 1-diphosphate: step 4/9. The protein is 1-(5-phosphoribosyl)-5-[(5-phosphoribosylamino)methylideneamino] imidazole-4-carboxamide isomerase of Bordetella bronchiseptica (strain ATCC BAA-588 / NCTC 13252 / RB50) (Alcaligenes bronchisepticus).